A 497-amino-acid chain; its full sequence is tRNA (adenine(58)-N(1))-methyltransferase non-catalytic subunit TRM6 (497 aa).

Residues T69–K102 form a disordered region. Positions K79 to K102 are enriched in basic and acidic residues. The segment at N94–Q104 is substrate. Position 107 is a phosphothreonine (T107). 2 substrate regions span residues K145–Y154 and R175–H182. Residues S276–K354 are disordered. S298 and S305 each carry phosphoserine. The segment covering E311–K354 has biased composition (basic and acidic residues). Substrate contacts are provided by R349 and R377. 2 substrate regions span residues R415–L423 and Q434–H441. The tract at residues P468–S497 is disordered. Over residues E478–S497 the composition is skewed to basic and acidic residues.

Belongs to the TRM6/GCD10 family. In terms of assembly, heterotetramer; composed of two copies of TRMT6 and two copies of TRMT61A.

Its subcellular location is the nucleus. Functionally, substrate-binding subunit of tRNA (adenine-N(1)-)-methyltransferase, which catalyzes the formation of N(1)-methyladenine at position 58 (m1A58) in initiator methionyl-tRNA. Together with the TRMT61A catalytic subunit, part of a mRNA N(1)-methyltransferase complex that mediates methylation of adenosine residues at the N(1) position of a small subset of mRNAs: N(1) methylation takes place in tRNA T-loop-like structures of mRNAs and is only present at low stoichiometries. The chain is tRNA (adenine(58)-N(1))-methyltransferase non-catalytic subunit TRM6 (TRMT6) from Bos taurus (Bovine).